The primary structure comprises 294 residues: Foldase protein PrsA 1 (294 aa).

Positions 1 to 21 (MTKLKKVMISLVAATLLLLAG) are cleaved as a signal peptide. The N-palmitoyl cysteine moiety is linked to residue cysteine 22. The S-diacylglycerol cysteine moiety is linked to residue cysteine 22. The PpiC domain maps to 135 to 226 (EPNITVRHIL…YGYHLIQLVK (92 aa)).

Belongs to the PrsA family.

The protein localises to the cell membrane. It carries out the reaction [protein]-peptidylproline (omega=180) = [protein]-peptidylproline (omega=0). Plays a major role in protein secretion by helping the post-translocational extracellular folding of several secreted proteins. This chain is Foldase protein PrsA 1 (prsA1), found in Listeria innocua serovar 6a (strain ATCC BAA-680 / CLIP 11262).